A 208-amino-acid chain; its full sequence is 3-demethoxyubiquinol 3-hydroxylase (208 aa).

Positions 57, 87, 90, 139, 171, and 174 each coordinate Fe cation.

The protein belongs to the COQ7 family. Fe cation is required as a cofactor.

It localises to the cell membrane. It carries out the reaction a 5-methoxy-2-methyl-3-(all-trans-polyprenyl)benzene-1,4-diol + AH2 + O2 = a 3-demethylubiquinol + A + H2O. Its pathway is cofactor biosynthesis; ubiquinone biosynthesis. Its function is as follows. Catalyzes the hydroxylation of 2-nonaprenyl-3-methyl-6-methoxy-1,4-benzoquinol during ubiquinone biosynthesis. This chain is 3-demethoxyubiquinol 3-hydroxylase, found in Nitrosospira multiformis (strain ATCC 25196 / NCIMB 11849 / C 71).